A 171-amino-acid polypeptide reads, in one-letter code: UPF0398 protein stu0232 (171 aa).

The protein belongs to the UPF0398 family.

This chain is UPF0398 protein stu0232, found in Streptococcus thermophilus (strain ATCC BAA-250 / LMG 18311).